A 101-amino-acid chain; its full sequence is Large ribosomal subunit protein uL23 (101 aa).

Belongs to the universal ribosomal protein uL23 family. Part of the 50S ribosomal subunit. Contacts protein L29, and trigger factor when it is bound to the ribosome.

In terms of biological role, one of the early assembly proteins it binds 23S rRNA. One of the proteins that surrounds the polypeptide exit tunnel on the outside of the ribosome. Forms the main docking site for trigger factor binding to the ribosome. The sequence is that of Large ribosomal subunit protein uL23 from Leptospira biflexa serovar Patoc (strain Patoc 1 / Ames).